The chain runs to 992 residues: Probable translation initiation factor IF-2 (992 aa).

Residues 96 to 220 (KNWHGVTVTP…LSLALLRFGI (125 aa)) enclose the DOD-type homing endonuclease domain. Residues 399–616 (TTETHNFIAN…LIAGLSQRYL (218 aa)) enclose the tr-type G domain. Residues 472–476 (DTPGH) and 526–529 (NKID) contribute to the GTP site.

It belongs to the TRAFAC class translation factor GTPase superfamily. Classic translation factor GTPase family. IF-2 subfamily. Post-translationally, this protein undergoes a protein self splicing that involves a post-translational excision of the intervening region (intein) followed by peptide ligation.

Function in general translation initiation by promoting the binding of the formylmethionine-tRNA to ribosomes. Seems to function along with eIF-2. The sequence is that of Probable translation initiation factor IF-2 (infB) from Pyrococcus abyssi (strain GE5 / Orsay).